The sequence spans 410 residues: D-3-phosphoglycerate dehydrogenase (410 aa).

NAD(+) contacts are provided by residues 161-162 (HI), Asp-181, 238-240 (ASR), and Asp-264. Residue Arg-240 is part of the active site. Residue Glu-269 is part of the active site. His-292 serves as the catalytic Proton donor. Position 292–295 (292–295 (HIGG)) interacts with NAD(+). The ACT domain maps to 339–410 (RLMHIHENRP…PGTIRARLLY (72 aa)).

Belongs to the D-isomer specific 2-hydroxyacid dehydrogenase family. Homotetramer.

It catalyses the reaction (2R)-3-phosphoglycerate + NAD(+) = 3-phosphooxypyruvate + NADH + H(+). The enzyme catalyses (R)-2-hydroxyglutarate + NAD(+) = 2-oxoglutarate + NADH + H(+). The protein operates within amino-acid biosynthesis; L-serine biosynthesis; L-serine from 3-phospho-D-glycerate: step 1/3. Its activity is regulated as follows. In bacteria displays feedback inhibition by L-serine. Its function is as follows. Catalyzes the reversible oxidation of 3-phospho-D-glycerate to 3-phosphonooxypyruvate, the first step of the phosphorylated L-serine biosynthesis pathway. Also catalyzes the reversible oxidation of 2-hydroxyglutarate to 2-oxoglutarate. This Escherichia coli O6:H1 (strain CFT073 / ATCC 700928 / UPEC) protein is D-3-phosphoglycerate dehydrogenase (serA).